Consider the following 347-residue polypeptide: Ribosomal RNA small subunit methyltransferase C (347 aa).

The protein belongs to the methyltransferase superfamily. RsmC family. As to quaternary structure, monomer.

It localises to the cytoplasm. It carries out the reaction guanosine(1207) in 16S rRNA + S-adenosyl-L-methionine = N(2)-methylguanosine(1207) in 16S rRNA + S-adenosyl-L-homocysteine + H(+). Functionally, specifically methylates the guanine in position 1207 of 16S rRNA in the 30S particle. This is Ribosomal RNA small subunit methyltransferase C from Shewanella putrefaciens (strain CN-32 / ATCC BAA-453).